Here is a 262-residue protein sequence, read N- to C-terminus: Late embryogenesis abundant protein 31 (262 aa).

The Nuclear localization signal (NLS) motif lies at 6-10 (QPKRP). SMP domains are found at residues 14 to 68 (VTYG…ANKR), 136 to 192 (ITIG…NHNA), and 201 to 260 (IKLI…NERA).

This sequence belongs to the LEA type SMP family. As to expression, embryo specific, only in dry mature seeds.

The protein resides in the nucleus. It is found in the nucleolus. The protein localises to the cytoplasm. Functionally, LEA proteins are late embryonic proteins abundant in higher plant seed embryos. The function of those proteins is not known. Promotes germination rate. Enhances cation toxicity (e.g. lithium ion) and osmotic stress (e.g. NaCl and sorbitol) tolerance during germination and in seedlings. The chain is Late embryogenesis abundant protein 31 from Arabidopsis thaliana (Mouse-ear cress).